The sequence spans 289 residues: Rhodopsin (289 aa).

Residues 1–7 (YLVSPAA) are Extracellular-facing. A helical membrane pass occupies residues 8–32 (YAALGAYMFLLILIGFPVNFLTLYV). Residues 33-44 (TLEHKKLRTPLN) lie on the Cytoplasmic side of the membrane. A helical transmembrane segment spans residues 45–67 (YILLNLAVADLFMVLGGFTTTMY). The Extracellular segment spans residues 68 to 81 (TSMHGYFVLGRLGC). Cysteines 81 and 158 form a disulfide. The helical transmembrane segment at 82 to 104 (NLEGFFATLGGEIALWSLVVLAI) threads the bilayer. The short motif at 105-107 (ERW) is the 'Ionic lock' involved in activated form stabilization element. The Cytoplasmic portion of the chain corresponds to 105–123 (ERWIVVCKPISNFRFTEDN). The chain crosses the membrane as a helical span at residues 124-144 (AIMGLAFSWVMALTCAVPPLV). Topologically, residues 145-173 (GWSRYIPEGMQCSCGVDYYTRAEGFNNES) are extracellular. The N-linked (GlcNAc...) asparagine glycan is linked to Asn171. The chain crosses the membrane as a helical span at residues 174 to 195 (FVIYMFIVHFPIPLSVIFFCYG). Residues 196 to 223 (RLLCAVKEAAAAQQESETTQRAEKEVSR) are Cytoplasmic-facing. Residues 224 to 245 (MVVILVIGFLVCWLPYASVAWW) traverse the membrane as a helical segment. The Extracellular portion of the chain corresponds to 246-257 (IFCNQGSDFGPI). Residues 258-279 (FMTLPSFFAKRPAIYNPMIYIC) traverse the membrane as a helical segment. Position 267 is an N6-(retinylidene)lysine (Lys267). Residues 280-289 (MNKQFRHCMI) are Cytoplasmic-facing.

The protein belongs to the G-protein coupled receptor 1 family. Opsin subfamily. Phosphorylated on some or all of the serine and threonine residues present in the C-terminal region. Post-translationally, contains one covalently linked retinal chromophore.

Its subcellular location is the membrane. It is found in the cell projection. It localises to the cilium. The protein localises to the photoreceptor outer segment. Its function is as follows. Photoreceptor required for image-forming vision at low light intensity. While most salt water fish species use retinal as chromophore, most freshwater fish use 3-dehydroretinal, or a mixture of retinal and 3-dehydroretinal. Light-induced isomerization of 11-cis to all-trans retinal triggers a conformational change that activates signaling via G-proteins. Subsequent receptor phosphorylation mediates displacement of the bound G-protein alpha subunit by arrestin and terminates signaling. The polypeptide is Rhodopsin (rho) (Batrachocottus multiradiatus (Baikal sculpin)).